A 384-amino-acid chain; its full sequence is S-adenosylmethionine synthase (384 aa).

Residue H15 participates in ATP binding. A Mg(2+)-binding site is contributed by D17. Position 43 (E43) interacts with K(+). E56 and Q99 together coordinate L-methionine. A flexible loop region spans residues 99–109 (QSPDINQGVDR). Residues 164–166 (DAK), 230–231 (RF), D239, 245–246 (RK), A262, and K266 each bind ATP. D239 contacts L-methionine. An L-methionine-binding site is contributed by K270.

This sequence belongs to the AdoMet synthase family. In terms of assembly, homotetramer; dimer of dimers. Requires Mg(2+) as cofactor. The cofactor is K(+).

It is found in the cytoplasm. It catalyses the reaction L-methionine + ATP + H2O = S-adenosyl-L-methionine + phosphate + diphosphate. The protein operates within amino-acid biosynthesis; S-adenosyl-L-methionine biosynthesis; S-adenosyl-L-methionine from L-methionine: step 1/1. In terms of biological role, catalyzes the formation of S-adenosylmethionine (AdoMet) from methionine and ATP. The overall synthetic reaction is composed of two sequential steps, AdoMet formation and the subsequent tripolyphosphate hydrolysis which occurs prior to release of AdoMet from the enzyme. In Erwinia tasmaniensis (strain DSM 17950 / CFBP 7177 / CIP 109463 / NCPPB 4357 / Et1/99), this protein is S-adenosylmethionine synthase.